A 224-amino-acid polypeptide reads, in one-letter code: Orotate phosphoribosyltransferase (224 aa).

Lysine 29 contributes to the 5-phospho-alpha-D-ribose 1-diphosphate binding site. Position 37-38 (37-38) interacts with orotate; the sequence is FF. 5-phospho-alpha-D-ribose 1-diphosphate-binding positions include 75–76, arginine 105, lysine 106, lysine 109, histidine 111, and 130–138; these read YK and DDVITAGTS. Orotate-binding residues include threonine 134 and arginine 162.

This sequence belongs to the purine/pyrimidine phosphoribosyltransferase family. PyrE subfamily. Homodimer. Mg(2+) is required as a cofactor.

It catalyses the reaction orotidine 5'-phosphate + diphosphate = orotate + 5-phospho-alpha-D-ribose 1-diphosphate. It participates in pyrimidine metabolism; UMP biosynthesis via de novo pathway; UMP from orotate: step 1/2. Its function is as follows. Catalyzes the transfer of a ribosyl phosphate group from 5-phosphoribose 1-diphosphate to orotate, leading to the formation of orotidine monophosphate (OMP). This chain is Orotate phosphoribosyltransferase, found in Bordetella bronchiseptica (strain ATCC BAA-588 / NCTC 13252 / RB50) (Alcaligenes bronchisepticus).